We begin with the raw amino-acid sequence, 204 residues long: Somatotropin (204 aa).

The N-terminal stretch at 1 to 17 (MDRVVLLLSVLSLGVSS) is a signal peptide. Glutamine 18 carries the post-translational modification Pyrrolidone carboxylic acid. A Zn(2+)-binding site is contributed by histidine 36. A disulfide bridge links cysteine 69 with cysteine 177. Glutamate 186 contributes to the Zn(2+) binding site. Cysteine 194 and cysteine 202 are joined by a disulfide.

This sequence belongs to the somatotropin/prolactin family.

It is found in the secreted. In terms of biological role, growth hormone plays an important role in growth control and is involved in the regulation of several anabolic processes. Implicated as an osmoregulatory substance important for seawater adaptation. In Lates calcarifer (Barramundi), this protein is Somatotropin (gh).